The sequence spans 155 residues: IFN signaling evasion protein OPG029 (155 aa).

This sequence belongs to the orthopoxvirus OPG029 family. In terms of assembly, interacts with host TANK, TBKBP1 and AZI2; these interactions prevent interferon production. Interacts with host STAT2.

Its function is as follows. Prevents establishment of cellular antiviral state by blocking virus-induced phosphorylation and activation of interferon regulatory factors 3/IRF3 and 7/IRF7, transcription factors critical for the induction of interferons alpha and beta. This blockage is produced through the inhibition of host TBK1, by binding host TBK1 adapter proteins TBKBP1 and AZI2, thereby producing a strong inhibition of the phosphorylation and activation of IRF3 and IRF7. Also acts as an inhibitor of the cellular response to type I IFN by interacting with host STAT2. Mechanistically, exerts its inhibitory effect after host ISGF3 complex (composed of STAT1, STAT2 and IRF9) binding to the interferon stimulated response element (ISRE). In Cynomys gunnisoni (Gunnison's prairie dog), this protein is IFN signaling evasion protein OPG029 (OPG019).